The following is an 888-amino-acid chain: Calcium-transporting ATPase 1 (888 aa).

The next 4 membrane-spanning stretches (helical) occupy residues 53-75, 79-97, 246-266, and 283-303; these read IFAQ…SAFV, ADAS…IGVV, VGKY…LIGF, and AVAA…AIGV. The Ca(2+) site is built by valine 284, alanine 285, isoleucine 287, and glutamate 289. The active-site 4-aspartylphosphate intermediate is aspartate 331. The next 6 membrane-spanning stretches (helical) occupy residues 675 to 695, 703 to 723, 747 to 767, 791 to 811, 831 to 851, and 865 to 885; these read ILFL…AILL, PIHI…SLGV, VPFL…AFIA, LLHA…VHSF, LVFS…IPPL, and WGFV…IKLA. The Ca(2+) site is built by asparagine 710 and aspartate 714.

It belongs to the cation transport ATPase (P-type) (TC 3.A.3) family. Type IIA subfamily.

It is found in the cell membrane. It carries out the reaction Ca(2+)(in) + ATP + H2O = Ca(2+)(out) + ADP + phosphate + H(+). Its activity is regulated as follows. Inhibited by cyclopiazonic acid (CPA). In terms of biological role, catalyzes the hydrolysis of ATP coupled with the transport of calcium. This chain is Calcium-transporting ATPase 1, found in Bacillus cereus (strain ATCC 10987 / NRS 248).